The chain runs to 372 residues: MKSQSIMSVERSAETSLTLEIPTSPLIIKITQQERNILSNVGNLLVKAFGNYENPDYIASLHLHAFQLLPERITRILSQFGSDFSAEQYGAIVFQGLIEVDQDDLGPTPPNWQGADYGKLNKYGFICSLLHGAVPSKPVQYYAQRKGGGLLHAVIPDEKMAATQTGSGSKTDLFVHTEDAFLSNQADFLSFLYLRNEERVPSTLYSIRSHGKMNPVMKKLFEPIYQCPKDANYNDEDVANSGPTASVLYGNRELPFIRFDAAEQIFNENAGQTSEALGNLMDFWDEAKTLINSDYIPNSGDLIFVNNHLCAHGRSAFIAGQRIENGEIIKCERRQMLRMMSKTSLIHIRSVTRTDDPYFIMEEHLGKIFDLD.

3 residues coordinate Fe cation: His176, Glu178, and His312.

The protein belongs to the clavaminate synthase family. It depends on Fe(2+) as a cofactor.

The enzyme catalyses L-lysine + 2-oxoglutarate + O2 = (4R)-4-hydroxy-L-lysine + succinate + CO2. In terms of biological role, alpha-ketoglutarate-dependent dioxygenase that in vitro catalyzes the regio- and stereoselective hydroxylation of L-lysine, leading to (4R)-4-hydroxy-L-lysine. The sequence is that of L-lysine 4-hydroxylase from Flavobacterium sp. (strain CF136).